A 160-amino-acid polypeptide reads, in one-letter code: Endoribonuclease YbeY (160 aa).

3 residues coordinate Zn(2+): His-112, His-116, and His-122. The disordered stretch occupies residues 141 to 160; it reads ELGHPDPYACDDEEPPSKEK.

The protein belongs to the endoribonuclease YbeY family. Requires Zn(2+) as cofactor.

The protein localises to the cytoplasm. Its function is as follows. Single strand-specific metallo-endoribonuclease involved in late-stage 70S ribosome quality control and in maturation of the 3' terminus of the 16S rRNA. This Pseudomonas paraeruginosa (strain DSM 24068 / PA7) (Pseudomonas aeruginosa (strain PA7)) protein is Endoribonuclease YbeY.